A 380-amino-acid chain; its full sequence is UPF0754 membrane protein Bsph_0374 (380 aa).

Transmembrane regions (helical) follow at residues 1–21 (MDNFIVTLLFMAIIGAAIGGV) and 357–377 (MITVLGAVLGGLIGIVQGLIV).

Belongs to the UPF0754 family.

The protein localises to the cell membrane. This is UPF0754 membrane protein Bsph_0374 from Lysinibacillus sphaericus (strain C3-41).